Here is a 160-residue protein sequence, read N- to C-terminus: Transcription antitermination protein NusB (160 aa).

Belongs to the NusB family.

Functionally, involved in transcription antitermination. Required for transcription of ribosomal RNA (rRNA) genes. Binds specifically to the boxA antiterminator sequence of the ribosomal RNA (rrn) operons. The sequence is that of Transcription antitermination protein NusB from Rhizobium rhizogenes (strain K84 / ATCC BAA-868) (Agrobacterium radiobacter).